The following is a 512-amino-acid chain: Serine/threonine-protein kinase BSK1 (512 aa).

G2 is lipidated: N-myristoyl glycine. The tract at residues F8–G48 is disordered. Residues G38–G48 are compositionally biased toward gly residues. A Protein kinase domain is found at D76–Q331. ATP is bound by residues S82–V90 and K104. Residue D198 is the Proton acceptor of the active site. S230 is subject to Phosphoserine. Positions A483 to G508 form a coiled coil.

It belongs to the protein kinase superfamily. Ser/Thr protein kinase family. Interacts with BRI1. Interacts with ASK7/BIN2, BSK5, BSK6, BSK8 and BSK11. Interacts with FLS2. Phosphorylated at Ser-230 by BRI1 upon brassinolide (BL) treatment. Phosphorylation at Ser-230 weakens the interaction between BSK1 and BRI1. Phosphorylated by ASK7/BIN2 and ASK9/BIL2.

It localises to the cell membrane. The enzyme catalyses L-seryl-[protein] + ATP = O-phospho-L-seryl-[protein] + ADP + H(+). It catalyses the reaction L-threonyl-[protein] + ATP = O-phospho-L-threonyl-[protein] + ADP + H(+). Functionally, serine/threonine kinase that acts as a positive regulator of brassinosteroid (BR) signaling downstream of the receptor kinase BRI1. Mediates signal transduction from BRI1 by functioning as substrate of BRI1. Functions as a positive regulator of plant immunity. May be involved in the regulation of pattern-triggered immunity (PTI) downstream of the flagellin receptor FLS2. Possesses kinase activity in vitro. Kinase activity is required for its function in innate immunity. In Arabidopsis thaliana (Mouse-ear cress), this protein is Serine/threonine-protein kinase BSK1.